The following is a 195-amino-acid chain: Small ribosomal subunit protein eS7 (195 aa).

Residues threonine 146 and threonine 151 each carry the phosphothreonine modification. Serine 172 and serine 173 each carry phosphoserine.

It belongs to the eukaryotic ribosomal protein eS7 family. In terms of assembly, component of the small ribosomal subunit (SSU). Mature yeast ribosomes consist of a small (40S) and a large (60S) subunit. The 40S small subunit contains 1 molecule of ribosomal RNA (18S rRNA) and at least 33 different proteins. The large 60S subunit contains 3 rRNA molecules (25S, 5.8S and 5S rRNA) and at least 46 different proteins. Interacts with snoRNA U3. uS11 interacts with MPP10. Component of the ribosomal small subunit (SSU) processome composed of at least 40 protein subunits and snoRNA U3.

The protein resides in the cytoplasm. It localises to the nucleus. The protein localises to the nucleolus. In terms of biological role, component of the ribosome, a large ribonucleoprotein complex responsible for the synthesis of proteins in the cell. The small ribosomal subunit (SSU) binds messenger RNAs (mRNAs) and translates the encoded message by selecting cognate aminoacyl-transfer RNA (tRNA) molecules. The large subunit (LSU) contains the ribosomal catalytic site termed the peptidyl transferase center (PTC), which catalyzes the formation of peptide bonds, thereby polymerizing the amino acids delivered by tRNAs into a polypeptide chain. The nascent polypeptides leave the ribosome through a tunnel in the LSU and interact with protein factors that function in enzymatic processing, targeting, and the membrane insertion of nascent chains at the exit of the ribosomal tunnel. eS7 is involved in nucleolar processing of pre-18S ribosomal RNA and ribosome assembly. This is Small ribosomal subunit protein eS7 (rps7) from Schizosaccharomyces pombe (strain 972 / ATCC 24843) (Fission yeast).